The primary structure comprises 291 residues: Ubiquinone biosynthesis protein COQ4, mitochondrial (291 aa).

Residues M1 to N37 constitute a mitochondrion transit peptide. 4 residues coordinate Zn(2+): H169, D170, H173, and E185. Basic and acidic residues predominate over residues P271–S283. Residues P271–Y291 are disordered.

It belongs to the COQ4 family. Component of a multi-subunit COQ enzyme complex, composed of at least COQ3, COQ4, COQ5, COQ6, COQ7 and COQ9. It depends on Zn(2+) as a cofactor.

The protein resides in the mitochondrion inner membrane. It catalyses the reaction a 4-hydroxy-3-methoxy-5-(all-trans-polyprenyl)benzoate + H(+) = a 2-methoxy-6-(all-trans-polyprenyl)phenol + CO2. It participates in cofactor biosynthesis; ubiquinone biosynthesis. In terms of biological role, lyase that catalyzes the C1-decarboxylation of 4-hydroxy-3-methoxy-5-(all-trans-polyprenyl)benzoic acid into 2-methoxy-6-(all-trans-polyprenyl)phenol during ubiquinone biosynthesis. The chain is Ubiquinone biosynthesis protein COQ4, mitochondrial from Coprinopsis cinerea (strain Okayama-7 / 130 / ATCC MYA-4618 / FGSC 9003) (Inky cap fungus).